We begin with the raw amino-acid sequence, 158 residues long: NAD(P)H-quinone oxidoreductase subunit J, chloroplastic (158 aa).

The protein belongs to the complex I 30 kDa subunit family. NDH is composed of at least 16 different subunits, 5 of which are encoded in the nucleus.

It localises to the plastid. The protein resides in the chloroplast thylakoid membrane. The catalysed reaction is a plastoquinone + NADH + (n+1) H(+)(in) = a plastoquinol + NAD(+) + n H(+)(out). It catalyses the reaction a plastoquinone + NADPH + (n+1) H(+)(in) = a plastoquinol + NADP(+) + n H(+)(out). Functionally, NDH shuttles electrons from NAD(P)H:plastoquinone, via FMN and iron-sulfur (Fe-S) centers, to quinones in the photosynthetic chain and possibly in a chloroplast respiratory chain. The immediate electron acceptor for the enzyme in this species is believed to be plastoquinone. Couples the redox reaction to proton translocation, and thus conserves the redox energy in a proton gradient. The polypeptide is NAD(P)H-quinone oxidoreductase subunit J, chloroplastic (Eucalyptus globulus subsp. globulus (Tasmanian blue gum)).